Consider the following 698-residue polypeptide: Elongation factor G (698 aa).

In terms of domain architecture, tr-type G spans 8–284; that stretch reads ANVRNIGIMA…AVVDFLPSPL (277 aa). GTP-binding positions include 17 to 24, 81 to 85, and 135 to 138; these read AHIDAGKT, DTPGH, and NKLD. Positions 289-309 are disordered; the sequence is IEGTGTDGETPLQRKPSTSEP.

It belongs to the TRAFAC class translation factor GTPase superfamily. Classic translation factor GTPase family. EF-G/EF-2 subfamily.

It is found in the cytoplasm. In terms of biological role, catalyzes the GTP-dependent ribosomal translocation step during translation elongation. During this step, the ribosome changes from the pre-translocational (PRE) to the post-translocational (POST) state as the newly formed A-site-bound peptidyl-tRNA and P-site-bound deacylated tRNA move to the P and E sites, respectively. Catalyzes the coordinated movement of the two tRNA molecules, the mRNA and conformational changes in the ribosome. This chain is Elongation factor G, found in Salinispora arenicola (strain CNS-205).